Here is a 429-residue protein sequence, read N- to C-terminus: 3-phosphoshikimate 1-carboxyvinyltransferase (429 aa).

The 3-phosphoshikimate site is built by lysine 22, serine 23, and arginine 27. Lysine 22 contributes to the phosphoenolpyruvate binding site. Phosphoenolpyruvate is bound by residues glycine 94 and arginine 122. Serine 167, glutamine 169, aspartate 315, and lysine 342 together coordinate 3-phosphoshikimate. Glutamine 169 contacts phosphoenolpyruvate. Residue aspartate 315 is the Proton acceptor of the active site. Positions 346 and 388 each coordinate phosphoenolpyruvate.

It belongs to the EPSP synthase family. In terms of assembly, monomer.

The protein resides in the cytoplasm. The catalysed reaction is 3-phosphoshikimate + phosphoenolpyruvate = 5-O-(1-carboxyvinyl)-3-phosphoshikimate + phosphate. It functions in the pathway metabolic intermediate biosynthesis; chorismate biosynthesis; chorismate from D-erythrose 4-phosphate and phosphoenolpyruvate: step 6/7. In terms of biological role, catalyzes the transfer of the enolpyruvyl moiety of phosphoenolpyruvate (PEP) to the 5-hydroxyl of shikimate-3-phosphate (S3P) to produce enolpyruvyl shikimate-3-phosphate and inorganic phosphate. The chain is 3-phosphoshikimate 1-carboxyvinyltransferase from Geobacter sulfurreducens (strain ATCC 51573 / DSM 12127 / PCA).